Consider the following 398-residue polypeptide: 8-amino-7-oxononanoate synthase (398 aa).

A substrate-binding site is contributed by arginine 23. Pyridoxal 5'-phosphate is bound at residue 110-111 (GY). Substrate is bound at residue histidine 135. Pyridoxal 5'-phosphate is bound by residues serine 181, histidine 209, and threonine 238. Position 241 is an N6-(pyridoxal phosphate)lysine (lysine 241). Threonine 355 is a binding site for substrate.

The protein belongs to the class-II pyridoxal-phosphate-dependent aminotransferase family. BioF subfamily. As to quaternary structure, homodimer. Pyridoxal 5'-phosphate is required as a cofactor.

The enzyme catalyses 6-carboxyhexanoyl-[ACP] + L-alanine + H(+) = (8S)-8-amino-7-oxononanoate + holo-[ACP] + CO2. The protein operates within cofactor biosynthesis; biotin biosynthesis. Functionally, catalyzes the decarboxylative condensation of pimeloyl-[acyl-carrier protein] and L-alanine to produce 8-amino-7-oxononanoate (AON), [acyl-carrier protein], and carbon dioxide. This chain is 8-amino-7-oxononanoate synthase, found in Cellvibrio japonicus (strain Ueda107) (Pseudomonas fluorescens subsp. cellulosa).